A 308-amino-acid chain; its full sequence is GTP cyclohydrolase FolE2 (308 aa).

It belongs to the GTP cyclohydrolase IV family.

It catalyses the reaction GTP + H2O = 7,8-dihydroneopterin 3'-triphosphate + formate + H(+). It participates in cofactor biosynthesis; 7,8-dihydroneopterin triphosphate biosynthesis; 7,8-dihydroneopterin triphosphate from GTP: step 1/1. Its function is as follows. Converts GTP to 7,8-dihydroneopterin triphosphate. This is GTP cyclohydrolase FolE2 from Idiomarina loihiensis (strain ATCC BAA-735 / DSM 15497 / L2-TR).